Reading from the N-terminus, the 293-residue chain is Methoxy mycolic acid synthase MmaA3 (293 aa).

Residues 39–40 (YS), 78–80 (GCG), 100–105 (TLSKNQ), 129–130 (WA), and isoleucine 142 contribute to the S-adenosyl-L-methionine site. The active site involves cysteine 275.

It belongs to the CFA/CMAS family.

It functions in the pathway lipid metabolism; mycolic acid biosynthesis. Functionally, involved in the biosynthesis of methoxymycolic acid. It catalyzes the O-methylation of the hydroxy group of the hydroxymycolate to form a methyl ether. This chain is Methoxy mycolic acid synthase MmaA3 (cmaB), found in Mycobacterium bovis (strain ATCC BAA-935 / AF2122/97).